Reading from the N-terminus, the 239-residue chain is dITP/XTP pyrophosphatase (239 aa).

7–12 (THNEGK) contributes to the substrate binding site. Catalysis depends on aspartate 74, which acts as the Proton acceptor. Aspartate 74 lines the Mg(2+) pocket. Substrate is bound by residues serine 75, 182-185 (FGYD), lysine 214, and 219-220 (HR).

Belongs to the HAM1 NTPase family. As to quaternary structure, homodimer. The cofactor is Mg(2+).

The enzyme catalyses XTP + H2O = XMP + diphosphate + H(+). It carries out the reaction dITP + H2O = dIMP + diphosphate + H(+). The catalysed reaction is ITP + H2O = IMP + diphosphate + H(+). In terms of biological role, pyrophosphatase that catalyzes the hydrolysis of nucleoside triphosphates to their monophosphate derivatives, with a high preference for the non-canonical purine nucleotides XTP (xanthosine triphosphate), dITP (deoxyinosine triphosphate) and ITP. Seems to function as a house-cleaning enzyme that removes non-canonical purine nucleotides from the nucleotide pool, thus preventing their incorporation into DNA/RNA and avoiding chromosomal lesions. This chain is dITP/XTP pyrophosphatase, found in Bifidobacterium animalis subsp. lactis (strain AD011).